The following is a 239-amino-acid chain: Venom nerve growth factor (239 aa).

The signal sequence occupies residues 1–18 (MSMLCYTLIIAFLIGIWA). The propeptide occupies 19–125 (APKSEDNVPL…ALNRNIQAKR (107 aa)). Positions 47 to 66 (GLKTSRNTDQRHPAPKKADD) are enriched in basic and acidic residues. A disordered region spans residues 47 to 68 (GLKTSRNTDQRHPAPKKADDQE). Disulfide bonds link Cys-139-Cys-203, Cys-181-Cys-231, and Cys-191-Cys-233.

It belongs to the NGF-beta family. Homodimer; non-covalently linked. Expressed by the venom gland.

Its subcellular location is the secreted. In terms of biological role, nerve growth factor is important for the development and maintenance of the sympathetic and sensory nervous systems. It stimulates division and differentiation of sympathetic and embryonic sensory neurons as well as basal forebrain cholinergic neurons in the brain. Its relevance in the snake venom is not clear. However, it has been shown to inhibit metalloproteinase-dependent proteolysis of platelet glycoprotein Ib alpha, suggesting a metalloproteinase inhibition to prevent metalloprotease autodigestion and/or protection against prey proteases. Binds a lipid between the two protein chains in the homodimer. The lipid-bound form promotes histamine relase from mouse mast cells, contrary to the lipid-free form. The polypeptide is Venom nerve growth factor (Pseudechis porphyriacus (Red-bellied black snake)).